A 208-amino-acid polypeptide reads, in one-letter code: Thymidylate kinase (208 aa).

11 to 18 is a binding site for ATP; the sequence is GGEGVGKS.

It belongs to the thymidylate kinase family.

The catalysed reaction is dTMP + ATP = dTDP + ADP. In terms of biological role, phosphorylation of dTMP to form dTDP in both de novo and salvage pathways of dTTP synthesis. In Methylococcus capsulatus (strain ATCC 33009 / NCIMB 11132 / Bath), this protein is Thymidylate kinase.